An 810-amino-acid chain; its full sequence is Phenylalanine--tRNA ligase beta subunit (810 aa).

In terms of domain architecture, tRNA-binding spans 39–150 (RTWANGVVVG…ENLPLGSDVR (112 aa)). A B5 domain is found at 411–495 (TWSRSIFLRL…RLYGYDNFCD (85 aa)). The Mg(2+) site is built by aspartate 473, aspartate 479, glutamate 482, and glutamate 483. The FDX-ACB domain occupies 716–809 (STYPASDRDI…LVEKFGVNLR (94 aa)).

The protein belongs to the phenylalanyl-tRNA synthetase beta subunit family. Type 1 subfamily. As to quaternary structure, tetramer of two alpha and two beta subunits. The cofactor is Mg(2+).

The protein localises to the cytoplasm. The catalysed reaction is tRNA(Phe) + L-phenylalanine + ATP = L-phenylalanyl-tRNA(Phe) + AMP + diphosphate + H(+). This Trichormus variabilis (strain ATCC 29413 / PCC 7937) (Anabaena variabilis) protein is Phenylalanine--tRNA ligase beta subunit.